The chain runs to 147 residues: Methylmalonyl-CoA mutase homolog (147 aa).

The protein to methylmalonyl-CoA mutase.

The protein is Methylmalonyl-CoA mutase homolog of Alkalihalophilus pseudofirmus (strain ATCC BAA-2126 / JCM 17055 / OF4) (Bacillus pseudofirmus).